A 212-amino-acid chain; its full sequence is MILENFKRESLIPLPVTFISTTSKDGIRNIAPYSCVMPVLRPFDLICVASAKMRDTVVNIKDTGEFVINMPGVEMVDKVIPTASHVPFDVNEFELADLKERPSKKVKAPGIEGCYAWMECKLHNIYEDEYEGFPYLLILGKVVHLEVNDDIYNPEDGSWDIEKANPLMMVESDRGMHFCTVSDINKFEPYGAMFPDGKDPLAWMYEKRETRE.

The protein belongs to the flavoredoxin family. FMN is required as a cofactor.

This is an uncharacterized protein from Methanothermobacter thermautotrophicus (strain ATCC 29096 / DSM 1053 / JCM 10044 / NBRC 100330 / Delta H) (Methanobacterium thermoautotrophicum).